We begin with the raw amino-acid sequence, 259 residues long: UPF0758 protein Bphyt_3148 (259 aa).

The MPN domain occupies 137-259 (LLNSPEAVEN…VYSFARAGWP (123 aa)). Positions 208, 210, and 221 each coordinate Zn(2+). The JAMM motif signature appears at 208–221 (HNHPSGAVQPSASD).

Belongs to the UPF0758 family.

The protein is UPF0758 protein Bphyt_3148 of Paraburkholderia phytofirmans (strain DSM 17436 / LMG 22146 / PsJN) (Burkholderia phytofirmans).